Consider the following 234-residue polypeptide: NAD-dependent protein deacylase (234 aa).

Positions 1–234 (MKNLVVLTGA…ELKQLLIPAP (234 aa)) constitute a Deacetylase sirtuin-type domain. 9–28 (GAGMSAESGISTFRDAGGLW) is a binding site for NAD(+). Tyr53 and Arg56 together coordinate substrate. 86–89 (QNVD) contacts NAD(+). The active-site Proton acceptor is the His104. NAD(+) is bound at residue 175-177 (GTS).

Belongs to the sirtuin family. Class III subfamily.

The protein resides in the cytoplasm. It carries out the reaction N(6)-acetyl-L-lysyl-[protein] + NAD(+) + H2O = 2''-O-acetyl-ADP-D-ribose + nicotinamide + L-lysyl-[protein]. The catalysed reaction is N(6)-succinyl-L-lysyl-[protein] + NAD(+) + H2O = 2''-O-succinyl-ADP-D-ribose + nicotinamide + L-lysyl-[protein]. NAD-dependent lysine deacetylase and desuccinylase that specifically removes acetyl and succinyl groups on target proteins. Modulates the activities of several proteins which are inactive in their acylated form. This chain is NAD-dependent protein deacylase, found in Bacteroides thetaiotaomicron (strain ATCC 29148 / DSM 2079 / JCM 5827 / CCUG 10774 / NCTC 10582 / VPI-5482 / E50).